The primary structure comprises 37 residues: Cytochrome b6-f complex subunit 5 (37 aa).

The chain crosses the membrane as a helical span at residues 5–25; that stretch reads LLSGIVLGLVPVTITGLFVAA.

This sequence belongs to the PetG family. In terms of assembly, the 4 large subunits of the cytochrome b6-f complex are cytochrome b6, subunit IV (17 kDa polypeptide, PetD), cytochrome f and the Rieske protein, while the 4 small subunits are PetG, PetL, PetM and PetN. The complex functions as a dimer.

It is found in the plastid. The protein localises to the chloroplast thylakoid membrane. In terms of biological role, component of the cytochrome b6-f complex, which mediates electron transfer between photosystem II (PSII) and photosystem I (PSI), cyclic electron flow around PSI, and state transitions. PetG is required for either the stability or assembly of the cytochrome b6-f complex. This chain is Cytochrome b6-f complex subunit 5, found in Emiliania huxleyi (Coccolithophore).